Consider the following 321-residue polypeptide: Bifunctional methyltransferase/endonuclease (321 aa).

The probable methylated-DNA--protein-cysteine methyltransferase stretch occupies residues 1–86; sequence MLSVDYENFD…PLGSAEKMRR (86 aa). C61 is a catalytic residue. The interval 87–318 is endonuclease V; it reads LIRDGITITN…YDFSTRNTAI (232 aa). Residues D145 and D204 each coordinate Mg(2+).

The protein in the N-terminal section; belongs to the MGMT family. In the C-terminal section; belongs to the endonuclease V family. The cofactor is Mg(2+).

It is found in the cytoplasm. It carries out the reaction Endonucleolytic cleavage at apurinic or apyrimidinic sites to products with a 5'-phosphate.. In terms of biological role, DNA repair enzyme involved in the repair of deaminated bases. Selectively cleaves double-stranded DNA at the second phosphodiester bond 3' to a deoxyinosine leaving behind the intact lesion on the nicked DNA. The protein is Bifunctional methyltransferase/endonuclease of Thermoplasma volcanium (strain ATCC 51530 / DSM 4299 / JCM 9571 / NBRC 15438 / GSS1).